The primary structure comprises 146 residues: Hemoglobin subunit delta (146 aa).

One can recognise a Globin domain in the interval 2-146 (HLTGEEKSAV…VATALAHKYH (145 aa)). Positions 63 and 92 each coordinate heme b.

This sequence belongs to the globin family. Heterotetramer of two delta chains and two alpha chains. As to expression, red blood cells.

The polypeptide is Hemoglobin subunit delta (HBD) (Ateles fusciceps (Brown-headed spider monkey)).